Here is a 308-residue protein sequence, read N- to C-terminus: Ribosomal RNA small subunit methyltransferase H (308 aa).

S-adenosyl-L-methionine contacts are provided by residues 36–38 (GGH), Asp55, Phe86, Asp103, and Gln110.

Belongs to the methyltransferase superfamily. RsmH family.

Its subcellular location is the cytoplasm. The catalysed reaction is cytidine(1402) in 16S rRNA + S-adenosyl-L-methionine = N(4)-methylcytidine(1402) in 16S rRNA + S-adenosyl-L-homocysteine + H(+). Its function is as follows. Specifically methylates the N4 position of cytidine in position 1402 (C1402) of 16S rRNA. This chain is Ribosomal RNA small subunit methyltransferase H, found in Helicobacter pylori (strain G27).